Reading from the N-terminus, the 414-residue chain is Protein MAK11 (414 aa).

Ser-2 is modified (N-acetylserine). 6 WD repeats span residues 50-78, 90-135, 147-177, 189-221, 238-267, and 298-330; these read AHSL…RIYD, SHQG…MVWR, GHTA…RLWN, LRKY…LIYE, LMHI…HFYP, and GHTN…VVWD. 2 positions are modified to phosphoserine: Ser-376 and Ser-380. Position 382 is a phosphothreonine (Thr-382).

As to quaternary structure, associates with 60S pre-ribosomal particles.

Its subcellular location is the nucleus. It localises to the nucleolus. It is found in the nucleus membrane. Its function is as follows. Essential for cell growth. Plays a role in assembly of 60S pre-ribosomal particles in the nucleolus. Also required for replication of the M1 double-stranded RNA of the L-A virus. This latter function may reflect an enhanced requirement for free 60S ribosomal particles for the translation of viral mRNAs which lack poly-A tails. This is Protein MAK11 (MAK11) from Saccharomyces cerevisiae (strain ATCC 204508 / S288c) (Baker's yeast).